The chain runs to 143 residues: Root meristem growth factor 10 (143 aa).

A signal peptide spans 1–27 (MDMLRSACFYFLLIVFVILSWSLLCDS). The propeptide occupies 28–130 (RHLGHMEKKL…SDQEHPGFNL (103 aa)). N60 is a glycosylation site (N-linked (GlcNAc...) asparagine). Positions 74–83 (NHGDNGQING) are enriched in polar residues. Residues 74 to 143 (NHGDNGQING…QPTTHPPHHN (70 aa)) are disordered. The short motif at 92-99 (VKRASDKK) is the Nuclear localization signal element. Y132 carries the post-translational modification Sulfotyrosine. P140 carries the post-translational modification Hydroxyproline.

This sequence belongs to the RGF family. Binds to LRR receptor-like serine/threonine-protein kinases RGI1, RGI2 and RGI3 to trigger their dimerization with SERK proteins and subsequent signaling. The tyrosine sulfation is critical for the function of the peptide. Expressed in root tips.

The protein resides in the secreted. The protein localises to the nucleus. Its function is as follows. Maintains the postembryonic root stem cell niche by regulating the expression levels and patterns of the transcription factor PLETHORA (PLT), mainly at the post-transcriptional level. Promotes root elongation. The polypeptide is Root meristem growth factor 10 (Arabidopsis thaliana (Mouse-ear cress)).